The primary structure comprises 31 residues: Protamine-YI (31 aa).

The interval 1-31 (ARRRRSSSRPIRRRRPRRRTTRRRRAGRRRR) is disordered.

In terms of tissue distribution, testis.

Its subcellular location is the nucleus. It is found in the chromosome. Functionally, protamines substitute for histones in the chromatin of sperm during the haploid phase of spermatogenesis. They compact sperm DNA into a highly condensed, stable and inactive complex. This is Protamine-YI from Clupea harengus (Atlantic herring).